Here is an 883-residue protein sequence, read N- to C-terminus: Phosphoenolpyruvate carboxylase (883 aa).

Catalysis depends on residues H138 and K546.

It belongs to the PEPCase type 1 family. It depends on Mg(2+) as a cofactor.

The enzyme catalyses oxaloacetate + phosphate = phosphoenolpyruvate + hydrogencarbonate. In terms of biological role, forms oxaloacetate, a four-carbon dicarboxylic acid source for the tricarboxylic acid cycle. The protein is Phosphoenolpyruvate carboxylase of Escherichia coli O7:K1 (strain IAI39 / ExPEC).